The primary structure comprises 535 residues: MEEAELLKERLQAITNKRKIQEDIAQRRIQIEEEKLKLHHLKKKALREKWLLDGLSTLSSEEQEDMLRQTQADQQQIKHLESSTDRLEQEIDGLEKEELQVSTKEVCVLQRLKSVERTTEDIIKAVKAEVREEPVHDIYAGIPDLPASYKPFFVKRMESATQEDGEEPRKALFAMEIKVEKDIKSGKSTVLSTIPVPSSEFEDAGVKVYDDGRKSIYALKSEGRGTQNGVDTLAPVEVEDLLRKATEKRSESPTEYHEPVFSNAYGSTQKGYISPRMNGHNSPHSENGVTQNGIVNKEALPCPTVPREVSRIKGPFPEESNISHNQPSMETQAEEPMADHTEHQPTVQRNHYKEIPNNLGDYNPDFSSLNLEEDMHYNVVHATPCCTDDSEPVTMIFMGYKHADDGDVKPISDYEGIIRAELVVIDDDDDDDDDEEADKKGEENTKESVSVSPIIRNQVITSSKIQDSIKKPTNQNITLNNQLPYKNSMSLQEQEASLGYNSFPIPNKQIVEDGTEDPSLTALRIRMAKLGRKVI.

The stretch at 1 to 105 (MEEAELLKER…KEELQVSTKE (105 aa)) forms a coiled coil. The interval 423–450 (VVIDDDDDDDDDEEADKKGEENTKESVS) is disordered. A compositionally biased stretch (acidic residues) spans 424-436 (VIDDDDDDDDDEE). The segment covering 437-446 (ADKKGEENTK) has biased composition (basic and acidic residues).

This sequence belongs to the paralemmin family.

It localises to the cytoplasm. The protein resides in the cell projection. Its subcellular location is the dendrite. It is found in the dendritic spine. The protein is Palmdelphin (palmd) of Xenopus laevis (African clawed frog).